We begin with the raw amino-acid sequence, 106 residues long: ATP-dependent Clp protease adapter protein ClpS (106 aa).

It belongs to the ClpS family. As to quaternary structure, binds to the N-terminal domain of the chaperone ClpA.

Its function is as follows. Involved in the modulation of the specificity of the ClpAP-mediated ATP-dependent protein degradation. This chain is ATP-dependent Clp protease adapter protein ClpS, found in Yersinia enterocolitica serotype O:8 / biotype 1B (strain NCTC 13174 / 8081).